Here is a 388-residue protein sequence, read N- to C-terminus: Alanine racemase, catabolic (388 aa).

Lys46 serves as the catalytic Proton acceptor; specific for D-alanine. Lys46 carries the N6-(pyridoxal phosphate)lysine modification. Arg145 lines the substrate pocket. Tyr267 (proton acceptor; specific for L-alanine) is an active-site residue. Residue Met315 participates in substrate binding.

This sequence belongs to the alanine racemase family. Pyridoxal 5'-phosphate serves as cofactor.

The catalysed reaction is L-alanine = D-alanine. In terms of biological role, isomerizes L-alanine to D-alanine which is then oxidized to pyruvate by DadA. This chain is Alanine racemase, catabolic (dadB), found in Agrobacterium fabrum (strain C58 / ATCC 33970) (Agrobacterium tumefaciens (strain C58)).